A 31-amino-acid polypeptide reads, in one-letter code: Delta-conotoxin-like ErVIA (31 aa).

The propeptide occupies 1 to 4 (LNKR). 3 disulfides stabilise this stretch: Cys5–Cys21, Cys12–Cys25, and Cys20–Cys29.

This sequence belongs to the conotoxin O1 superfamily. Expressed by the venom duct.

Its subcellular location is the secreted. Functionally, this toxin activates voltage-gated sodium channels. It shifts the voltage-dependence of activation to more hyperpolarized potentials but has only little effect on channel inactivation. It is active on Nav1.3/SCN3A (EC(50)=3.98 nM), Nav1.4/SCN4A (EC(50)=4.99 nM), Nav1.6/SCN8A (EC(50)=1.27 nM) and Nav1.7/SCN9A (EC(50)=2.42 nM) voltage-gated sodium channels. In vivo, it induces nocifensive or pain-like behaviors in mice when injected intraplantarly. This is Delta-conotoxin-like ErVIA from Conus eburneus (Ivory cone).